Reading from the N-terminus, the 328-residue chain is Sulfate adenylyltransferase subunit 2 (328 aa).

2 disordered regions span residues 15–34 (AAPD…PSSH) and 304–328 (SERE…EGYF).

The protein belongs to the PAPS reductase family. CysD subfamily. As to quaternary structure, heterodimer composed of CysD, the smaller subunit, and CysN.

It carries out the reaction sulfate + ATP + H(+) = adenosine 5'-phosphosulfate + diphosphate. It participates in sulfur metabolism; hydrogen sulfide biosynthesis; sulfite from sulfate: step 1/3. With CysN forms the ATP sulfurylase (ATPS) that catalyzes the adenylation of sulfate producing adenosine 5'-phosphosulfate (APS) and diphosphate, the first enzymatic step in sulfur assimilation pathway. APS synthesis involves the formation of a high-energy phosphoric-sulfuric acid anhydride bond driven by GTP hydrolysis by CysN coupled to ATP hydrolysis by CysD. In Rhodopseudomonas palustris (strain BisA53), this protein is Sulfate adenylyltransferase subunit 2.